Here is a 509-residue protein sequence, read N- to C-terminus: O-acetyltransferase anaAT (509 aa).

The protein belongs to the fumigaclavine B O-acetyltransferase family. In terms of assembly, monomer.

It catalyses the reaction (2R,3S,11R)-aszonalenin + acetyl-CoA = (2R,3S,11R)-acetylaszonalenin + CoA. It functions in the pathway alkaloid biosynthesis. O-acetyltransferase; part of the gene cluster that mediates the biosynthesis of the prenylated pyrroloindoline diketopiperazine acetylaszonalenin. The first step in the pathway is the formation of (R)-benzodiazepinedione by condensation of tryptophan and anthranilic acid catalyzed by the non-ribosomal peptide synthetase anaPS. The prenyltransferase anaPT then converts (R)-benzodiazepinedione to aszonalenin in the presence of dimethylallyl diphosphate (DMAPP) via C3-prenylation. The last step in the biosynthesis of acetylaszonalenin via acetylation of aszonalenin at position N1 catalyzed by anaAT. This Neosartorya fischeri (strain ATCC 1020 / DSM 3700 / CBS 544.65 / FGSC A1164 / JCM 1740 / NRRL 181 / WB 181) (Aspergillus fischerianus) protein is O-acetyltransferase anaAT.